A 541-amino-acid polypeptide reads, in one-letter code: Membrane protein insertase YidC (541 aa).

A helical transmembrane segment spans residues 6–26 (SLLVLALIFISFLVYQQWQLD). Positions 34–56 (EQTTSITATSDVPASSPSNSQAI) are disordered. A run of 4 helical transmembrane segments spans residues 337-357 (FWLL…IICV), 416-436 (LGGC…YWTF), 454-474 (LSAQ…MFLL), and 495-515 (PLIF…YWLV).

It belongs to the OXA1/ALB3/YidC family. Type 1 subfamily. As to quaternary structure, interacts with the Sec translocase complex via SecD. Specifically interacts with transmembrane segments of nascent integral membrane proteins during membrane integration.

The protein localises to the cell inner membrane. Its function is as follows. Required for the insertion and/or proper folding and/or complex formation of integral membrane proteins into the membrane. Involved in integration of membrane proteins that insert both dependently and independently of the Sec translocase complex, as well as at least some lipoproteins. Aids folding of multispanning membrane proteins. The polypeptide is Membrane protein insertase YidC (Haemophilus influenzae (strain PittEE)).